Reading from the N-terminus, the 86-residue chain is Large ribosomal subunit protein uL23 (86 aa).

This sequence belongs to the universal ribosomal protein uL23 family. In terms of assembly, part of the 50S ribosomal subunit. Contacts protein L29.

In terms of biological role, binds to 23S rRNA. One of the proteins that surrounds the polypeptide exit tunnel on the outside of the ribosome. This is Large ribosomal subunit protein uL23 from Caldivirga maquilingensis (strain ATCC 700844 / DSM 13496 / JCM 10307 / IC-167).